A 427-amino-acid polypeptide reads, in one-letter code: Probable threonylcarbamoyladenosine tRNA methylthiotransferase (427 aa).

In terms of domain architecture, MTTase N-terminal spans 12–118; that stretch reads MRVYVEGYGC…AGEILKNYVE (107 aa). Residues cysteine 21, cysteine 57, cysteine 86, cysteine 155, cysteine 159, and cysteine 162 each contribute to the [4Fe-4S] cluster site. The Radical SAM core domain occupies 141–370; the sequence is LKPSLITPLP…DKLRRELSYL (230 aa). The 55-residue stretch at 373–427 folds into the TRAM domain; the sequence is KKYIGKAMKVLVLDEGKGYTDNFKVVKFEGGEVGEFRKVKITDAKTFGLKGELIL.

The protein belongs to the methylthiotransferase family. CDKAL1 subfamily. [4Fe-4S] cluster serves as cofactor.

It carries out the reaction N(6)-L-threonylcarbamoyladenosine(37) in tRNA + (sulfur carrier)-SH + AH2 + 2 S-adenosyl-L-methionine = 2-methylsulfanyl-N(6)-L-threonylcarbamoyladenosine(37) in tRNA + (sulfur carrier)-H + 5'-deoxyadenosine + L-methionine + A + S-adenosyl-L-homocysteine + 2 H(+). Functionally, catalyzes the methylthiolation of N6-threonylcarbamoyladenosine (t(6)A), leading to the formation of 2-methylthio-N6-threonylcarbamoyladenosine (ms(2)t(6)A) at position 37 in tRNAs that read codons beginning with adenine. This chain is Probable threonylcarbamoyladenosine tRNA methylthiotransferase, found in Methanocaldococcus jannaschii (strain ATCC 43067 / DSM 2661 / JAL-1 / JCM 10045 / NBRC 100440) (Methanococcus jannaschii).